A 1318-amino-acid polypeptide reads, in one-letter code: Serine/threonine-protein kinase ppk18 (1318 aa).

The tract at residues 431–485 (PSVSPEEVHDISQFNHRNDPPITAASVDSSNSFSVHRSSTNHSSTNSGSPNLSRR) is disordered. Residues 462–479 (SFSVHRSSTNHSSTNSGS) are compositionally biased toward low complexity. A Protein kinase domain is found at 566–934 (YEIIKPISKG…INEIKEHPFF (369 aa)). ATP-binding positions include 572–580 (ISKGTFGTV) and lysine 595. The active-site Proton acceptor is aspartate 690. In terms of domain architecture, AGC-kinase C-terminal spans 935 to 1044 (NGINWDDIFS…KNLSVLERAN (110 aa)). Disordered regions lie at residues 968-1022 (GAAE…FSEA), 1058-1078 (KLHI…DMPS), and 1091-1127 (SLMT…GPKS). A compositionally biased stretch (polar residues) spans 972–1000 (SNMSSSVNSGEEVSKDNNVSQERGSQFLR). Polar residues predominate over residues 1091-1115 (SLMTNQGSNFSSTDSTPRKSINSSD). Over residues 1116-1127 (VESRSKTDGPKS) the composition is skewed to basic and acidic residues. Residues 1200-1316 (KALICVSKLN…LLRGYIARLC (117 aa)) enclose the Response regulatory domain.

The protein belongs to the protein kinase superfamily. Ser/Thr protein kinase family.

The protein resides in the cytoplasm. The catalysed reaction is L-seryl-[protein] + ATP = O-phospho-L-seryl-[protein] + ADP + H(+). It catalyses the reaction L-threonyl-[protein] + ATP = O-phospho-L-threonyl-[protein] + ADP + H(+). The protein is Serine/threonine-protein kinase ppk18 (ppk18) of Schizosaccharomyces pombe (strain 972 / ATCC 24843) (Fission yeast).